A 383-amino-acid polypeptide reads, in one-letter code: Chorismate synthase (383 aa).

NADP(+) contacts are provided by arginine 39 and arginine 45. FMN is bound by residues 128 to 130 (RAS), glycine 291, 306 to 310 (KPIAT), and arginine 332.

This sequence belongs to the chorismate synthase family. As to quaternary structure, homotetramer. The cofactor is FMNH2.

The catalysed reaction is 5-O-(1-carboxyvinyl)-3-phosphoshikimate = chorismate + phosphate. The protein operates within metabolic intermediate biosynthesis; chorismate biosynthesis; chorismate from D-erythrose 4-phosphate and phosphoenolpyruvate: step 7/7. Functionally, catalyzes the anti-1,4-elimination of the C-3 phosphate and the C-6 proR hydrogen from 5-enolpyruvylshikimate-3-phosphate (EPSP) to yield chorismate, which is the branch point compound that serves as the starting substrate for the three terminal pathways of aromatic amino acid biosynthesis. This reaction introduces a second double bond into the aromatic ring system. The polypeptide is Chorismate synthase (Thermus thermophilus (strain ATCC BAA-163 / DSM 7039 / HB27)).